The primary structure comprises 205 residues: Holliday junction branch migration complex subunit RuvA (205 aa).

Positions 1–64 (MIGRLRGLLV…EDAQLLYGFI (64 aa)) are domain I. The tract at residues 65–143 (TKQERALFRL…SLMEASAGSE (79 aa)) is domain II. Residues 144-156 (REFMLKSNYTPAP) form a flexible linker region. The interval 157-205 (VINTAEEDAIAALLSLGYKPAQASKAVSAVYQDGMDSETLIKSSLKSML) is domain III.

Belongs to the RuvA family. In terms of assembly, homotetramer. Forms an RuvA(8)-RuvB(12)-Holliday junction (HJ) complex. HJ DNA is sandwiched between 2 RuvA tetramers; dsDNA enters through RuvA and exits via RuvB. An RuvB hexamer assembles on each DNA strand where it exits the tetramer. Each RuvB hexamer is contacted by two RuvA subunits (via domain III) on 2 adjacent RuvB subunits; this complex drives branch migration. In the full resolvosome a probable DNA-RuvA(4)-RuvB(12)-RuvC(2) complex forms which resolves the HJ.

The protein localises to the cytoplasm. Functionally, the RuvA-RuvB-RuvC complex processes Holliday junction (HJ) DNA during genetic recombination and DNA repair, while the RuvA-RuvB complex plays an important role in the rescue of blocked DNA replication forks via replication fork reversal (RFR). RuvA specifically binds to HJ cruciform DNA, conferring on it an open structure. The RuvB hexamer acts as an ATP-dependent pump, pulling dsDNA into and through the RuvAB complex. HJ branch migration allows RuvC to scan DNA until it finds its consensus sequence, where it cleaves and resolves the cruciform DNA. In Shewanella sediminis (strain HAW-EB3), this protein is Holliday junction branch migration complex subunit RuvA.